Reading from the N-terminus, the 509-residue chain is FAD-linked oxidoreductase anuG (509 aa).

The N-terminal stretch at 1 to 21 (MVQISNVWGFGLAIMASLAAA) is a signal peptide. The FAD-binding PCMH-type domain occupies 75–246 (YAAPKFTVVV…TSFEMSIYPT (172 aa)).

It belongs to the oxygen-dependent FAD-linked oxidoreductase family. FAD is required as a cofactor.

It catalyses the reaction (2S,9S)-annullatin H + 2 A = (2S,9S)-annullatin D + 2 AH2. Its pathway is secondary metabolite biosynthesis. Functionally, cytochrome P450 monooxygenase; part of the gene cluster that mediates the biosynthesis of annullatin D, an alkylated aromatic polyketide with a fused dihydrobenzofuran lactone ring system that exhibits potent agonistic activities toward the cannabinoid receptors. Within the pathway, anuG is responsible for the five-member lactone ring formation in (2S, 9S)-annullatin D via oxidative lactonization between the two hydroxyl groups. The annullatin backbone 2-hydroxymethyl-3-pentylphenol is assembled from one acetyl-CoA starter unit and 5 malonyl-CoA elongation units by cooperation of the highly reducing polyketide synthase anuA, the short-chain dehydrogenase anuB and the oxidoreductase anuC, before being hydroxylated at the C-5 alkyl chain by the cytochrome P450 monooxygenase anuE to form (8S)-annullatin E. The prenyltransferase anuH subsequently installs one isoprenyl group at the benzene ring to form (8S)-annullatin J. Enzymatic or nonenzymatic dihydro-benzofuran ring formation between the prenyl and the phenolic hydroxyl groups in (8S)-annullatin J results in two diastereomers (2S,9S)-annullatin H and compound 12. The intermediate (2S,9S)-annullatin H is then converted to (2S,9S)-annullatin D by the FAD-linked oxidoreductase anuG-catalyzed five-member lactone ring formation. The isomer 12 acts as a substrate for the short-chain dehydrogenase anuF and is oxidized to (2R)-annullatin F, which is subsequently acetylated by an acetyltransferase leading to (2R)-annullatin G formation. The remaining enzymes identified within the cluster, anuD, anuI and anuJ, seem not to be involved in annullatin biosynthesis. This chain is FAD-linked oxidoreductase anuG, found in Penicillium roqueforti (strain FM164).